A 433-amino-acid chain; its full sequence is Epi-neemfruitin B synthase L1AT (433 aa).

Active-site proton acceptor residues include His-151 and Asp-372.

The protein belongs to the plant acyltransferase family. In terms of assembly, monomer. As to expression, mainly expressed in petioles and, to a lower extent, in roots.

The enzyme catalyses (21S)-21-acetyl-1-hydroxy-apo-melianone + acetyl-CoA = epi-neemfruitin B + acetate + CoA + H(+). The protein operates within secondary metabolite biosynthesis; terpenoid biosynthesis. Acetyltransferase involved in the biosynthesis of limonoids triterpene natural products such as azadirachtin, an antifeedant widely used as bioinsecticide, and possessing many medicinal applications including anti-tumoral, anti-malarial, anti-rheumatic, antibacterial, anti-inflammatory, anti-pyretic and diuretic effects. Catalyzes the formation of epi-neemfruitin B from (21S)-21-acetyl-1-hydroxy-apo-melianone. The protein is Epi-neemfruitin B synthase L1AT of Melia azedarach (Chinaberry tree).